A 337-amino-acid chain; its full sequence is MLRETWLCVILVAFVSHPVWLQKPHKRKTQLKAAGCCEEMRELKAQVANLSSLLGELSRKQESDWVSVVMQVMELESSSKHMESRLSTAESKYSEMNNQIDIMQLQAAQTVTQTSADAIYDCSSLYQKNYRISGVYKLPPDEFLGSPELEVFCDMETSGGGWTIIQRRKSGLVSFYQDWRQYKQGFGSIRGDFWLGNEHIHRLTRQPSRLRVELEDWEGNARYAEYSYFALGNELNSYRLFLGNYSGNVGKDALLYHNNTVFSTKDKDNDNCLDKCAQLRKGGYWYNCCTDSNLNGVYYRLGEHRKHMDGISWYGWHGANYSLKRVEMKIRPEAFKP.

The first 21 residues, 1–21 (MLRETWLCVILVAFVSHPVWL), serve as a signal peptide directing secretion. A coiled-coil region spans residues 30–110 (QLKAAGCCEE…DIMQLQAAQT (81 aa)). N-linked (GlcNAc...) asparagine glycosylation occurs at N49. The region spanning 113–334 (QTSADAIYDC…RVEMKIRPEA (222 aa)) is the Fibrinogen C-terminal domain. C122 and C153 form a disulfide bridge. N244 and N258 each carry an N-linked (GlcNAc...) asparagine glycan. The cysteines at positions 276 and 289 are disulfide-linked. N320 carries N-linked (GlcNAc...) asparagine glycosylation.

Homotetramer; disulfide-linked.

It localises to the secreted. Its function is as follows. Has a role in the formation and organization of the extracellular matrix. In the eye, it functions as a mediator of dexamethasone-induced matrix deposition in the trabecular meshwork, the tissue responsible for the outflow of the ocular aqueous humor and for the maintenance of intraocular pressure. Is a negative regulator of angiogenesis in the cornea, and plays a major role in maintaining corneal avascularity and transparency. The protein is Angiopoietin-related protein 7 (Angptl7) of Mus musculus (Mouse).